The chain runs to 552 residues: DNA ligase (552 aa).

An ATP-binding site is contributed by Glu-229. The active-site N6-AMP-lysine intermediate is Lys-231. 2 residues coordinate ATP: Arg-236 and Glu-283. Residues Glu-283 and Glu-377 each coordinate Mg(2+). The ATP site is built by Lys-382 and Lys-397.

Belongs to the ATP-dependent DNA ligase family. In terms of assembly, interacts with host TOP2A and TOP2B. Requires Mg(2+) as cofactor.

Its subcellular location is the host cytoplasm. The enzyme catalyses ATP + (deoxyribonucleotide)n-3'-hydroxyl + 5'-phospho-(deoxyribonucleotide)m = (deoxyribonucleotide)n+m + AMP + diphosphate.. In terms of biological role, DNA ligase that seals nicks in double-stranded DNA during DNA replication, DNA recombination and DNA repair. Recruits cellular topoisomerase II to sites of viral replication and assembly. The sequence is that of DNA ligase (OPG180) from Vaccinia virus (strain Copenhagen) (VACV).